The following is a 1088-amino-acid chain: Insulin receptor substrate 1-B (1088 aa).

Residues 15–117 (DVRKVGYLRK…WYQALVDLHN (103 aa)) enclose the PH domain. Y48 carries the post-translational modification Phosphotyrosine. In terms of domain architecture, IRS-type PTB spans 155 to 259 (FKEVWQVIMK…EAMKALSDEF (105 aa)). Positions 259-428 (FRPRSKSQSS…GGFISSDEYG (170 aa)) are disordered. Composition is skewed to low complexity over residues 264–278 (KSQS…ISVP), 302–312 (SATATSPAGGA), 379–400 (SPSA…GSTS), and 408–420 (SSAS…SDGG). The residue at position 307 (S307) is a Phosphoserine. A Phosphotyrosine; by INSR modification is found at Y460. Positions 460–463 (YICM) match the YXXM motif 1 motif. Composition is skewed to polar residues over residues 466–479 (SSSH…QRYQ) and 499–516 (SSGT…PSQS). Disordered regions lie at residues 466–485 (SSSH…RGEE) and 496–516 (RTHS…PSQS). Short sequence motifs (YXXM motif) lie at residues 521–524 (YTEM), 567–570 (YMPM), 584–587 (YMPM), 612–615 (YMMM), and 654–657 (YINM). Phosphotyrosine; by INSR is present on residues Y567 and Y584. Residue Y612 is modified to Phosphotyrosine. The interval 704-785 (NLRISANSGH…PPEPKSPGEY (82 aa)) is disordered. A compositionally biased stretch (polar residues) spans 707–718 (ISANSGHNLYTE). Low complexity predominate over residues 719–729 (DSSSSSTSSDS). 2 positions are modified to phosphotyrosine; by INSR: Y785 and Y823. The tract at residues 785–787 (YVN) is GRB2-binding. The short motif at 823 to 826 (YMNM) is the YXXM motif 7 element. The segment covering 840–863 (TSSYEPPNKPVNSVCPTETCSSSR) has biased composition (polar residues). Residues 840–868 (TSSYEPPNKPVNSVCPTETCSSSRPPIRG) are disordered. Phosphotyrosine; by INSR is present on Y875. 2 consecutive short sequence motifs (YXXM motif) follow at residues 875–878 (YMSM) and 909–912 (YAEM). A disordered region spans residues 935–1006 (ASRSSLLGQG…SGEDVKRHSS (72 aa)). Composition is skewed to polar residues over residues 946–961 (GPSA…NRNP) and 980–995 (ETFS…TTGP). A phosphotyrosine; by INSR mark is found at Y1037 and Y1069.

In terms of assembly, interacts with the NPXY motif of tyrosine-phosphorylated igf1r and insr via the PTB domain. Binds to phosphatidylinositol 3-kinase p85 subunit at a low level in vitro prior to phosphorylation. Binding is greatly enhanced following tyrosine phosphorylation by insr and probably occurs via the phosphorylated YXXM motifs. Post-translationally, phosphorylation of Tyr-785 is required for grb2-binding.

May mediate the control of various cellular processes by insulin. When phosphorylated by the insulin receptor binds specifically to various cellular proteins containing SH2 domains such as phosphatidylinositol 3-kinase p85 subunit or grb2. Activates phosphatidylinositol 3-kinase when bound to the regulatory p85 subunit. In Xenopus laevis (African clawed frog), this protein is Insulin receptor substrate 1-B (irs1-b).